A 555-amino-acid chain; its full sequence is Transmembrane protein 87A (555 aa).

Positions 1–21 are cleaved as a signal peptide; the sequence is MAAAAWLQVLPVILLLLGAHP. Over 22–225 the chain is Lumenal; the sequence is SPLSFFSAGP…YEYLTLEDYP (204 aa). Intrachain disulfides connect cysteine 74-cysteine 128 and cysteine 89-cysteine 431. N-linked (GlcNAc...) asparagine glycosylation is found at asparagine 79, asparagine 127, asparagine 157, and asparagine 160. The helical transmembrane segment at 226 to 246 threads the bilayer; the sequence is LMIFFMVMCIVYVLFGVLWLA. Topologically, residues 247-257 are cytoplasmic; that stretch reads WSACYWRDLLR. A helical transmembrane segment spans residues 258–278; that stretch reads IQFWIGAVIFLGMLEKAVFYA. The Lumenal portion of the chain corresponds to 279-305; it reads EFQNIRYKGESVQGALILAELLSAVKR. A helical membrane pass occupies residues 306–322; that stretch reads SLARTLVIIVSLGYGIV. At 323–325 the chain is on the cytoplasmic side; that stretch reads KPR. The chain crosses the membrane as a helical span at residues 326–346; it reads LGVTLHKVVVAGALYLLFSGM. Residues 347-361 lie on the Lumenal side of the membrane; it reads EGVLRVTGAQTDLAS. Residues 362-382 form a helical membrane-spanning segment; sequence LAFIPLAFLDTALCWWIFISL. At 383-403 the chain is on the cytoplasmic side; the sequence is TQTMKLLKLRRNIVKLSLYRH. The helical transmembrane segment at 404–424 threads the bilayer; it reads FTNTLILAVAASIVFIIWTTM. Over 425-437 the chain is Lumenal; sequence KFRIVTCQSDWRE. Residues 438–458 traverse the membrane as a helical segment; that stretch reads LWVDDAIWRLLFSMILFVIMV. Topologically, residues 459-555 are cytoplasmic; it reads LWRPSANNQR…ITHFERSKME (97 aa). The interval 473-516 is disordered; that stretch reads PLSEEEEEDEQKEPMLKESFEGMKMRSTKQEPNGNSKVNKAQED. Positions 484-496 are enriched in basic and acidic residues; the sequence is KEPMLKESFEGMK. The span at 502–511 shows a compositional bias: polar residues; the sequence is QEPNGNSKVN. Position 540 is a phosphoserine (serine 540).

Belongs to the LU7TM family. TMEM87 subfamily. In terms of assembly, may interact with STOML3; STOML3 potentiates the mechanosensitive ion channel activity associated with TMEM87A.

The protein localises to the cell membrane. It is found in the golgi apparatus membrane. It localises to the cell projection. Its subcellular location is the ruffle. Functionally, potential monoatomic ion channel gated by mechanical force, implicated in normal touch sensitivity through the generation of mechanically activated currents. However, a direct channel activity is debated and an alternative could be that it functions as a chaperone for an unidentified mechanosensitive ion channel. Could also be involved in cell mechanosensitivity regulating cell adhesion and migration. May also be involved in retrograde transport from endosomes to the trans-Golgi network (TGN). The protein is Transmembrane protein 87A of Homo sapiens (Human).